The primary structure comprises 149 residues: D-aminoacyl-tRNA deacylase (149 aa).

A Gly-cisPro motif, important for rejection of L-amino acids motif is present at residues 137 to 138 (GP).

Belongs to the DTD family. Homodimer.

The protein localises to the cytoplasm. The enzyme catalyses glycyl-tRNA(Ala) + H2O = tRNA(Ala) + glycine + H(+). It catalyses the reaction a D-aminoacyl-tRNA + H2O = a tRNA + a D-alpha-amino acid + H(+). In terms of biological role, an aminoacyl-tRNA editing enzyme that deacylates mischarged D-aminoacyl-tRNAs. Also deacylates mischarged glycyl-tRNA(Ala), protecting cells against glycine mischarging by AlaRS. Acts via tRNA-based rather than protein-based catalysis; rejects L-amino acids rather than detecting D-amino acids in the active site. By recycling D-aminoacyl-tRNA to D-amino acids and free tRNA molecules, this enzyme counteracts the toxicity associated with the formation of D-aminoacyl-tRNA entities in vivo and helps enforce protein L-homochirality. This Clostridium botulinum (strain Eklund 17B / Type B) protein is D-aminoacyl-tRNA deacylase.